A 313-amino-acid chain; its full sequence is Type I restriction enzyme EcoprrI endonuclease subunit (313 aa).

Belongs to the HsdR family. As to quaternary structure, the type I restriction/modification system is composed of three polypeptides R, M and S; the restriction enzyme has stoichiometry R(2)M(2)S(1) while the methyltransferase is M(2)S(1).

The enzyme catalyses Endonucleolytic cleavage of DNA to give random double-stranded fragments with terminal 5'-phosphates, ATP is simultaneously hydrolyzed.. In terms of biological role, the subtype C restriction (R) subunit of a type I restriction enzyme that recognizes 5'-CCAN(7)RTGC-3' and cleaves a random distance away. The R subunit is required for both endonuclease and ATPase activities but not for modification. Cleaves only non-methylated DNA, hemi-methylated and fully methylated DNA are not substrates. After locating a non-methylated recognition site, the enzyme complex serves as a molecular motor that translocates DNA in an ATP-dependent manner until a collision occurs that triggers cleavage. The prr locus restricts phage T4 mutants lacking polynucleotide kinase or RNA ligase; T4 mutants lacking these genes manifest a T4-induced anticodon nuclease (ACNase). This is a putative 'masking-agent' for the ACNase encoded by prrC. It is thought that Stp and other T4-encoded ACNase factors counteract the masking agents, thus activating the latent ACNase. This is Type I restriction enzyme EcoprrI endonuclease subunit from Escherichia coli.